Here is a 260-residue protein sequence, read N- to C-terminus: 3-dehydroquinate dehydratase (260 aa).

Residues 50-52 (EWR) and Arg86 each bind 3-dehydroquinate. His148 acts as the Proton donor/acceptor in catalysis. Residue Lys175 is the Schiff-base intermediate with substrate of the active site. Residues Arg217, Ser236, and Gln240 each contribute to the 3-dehydroquinate site.

This sequence belongs to the type-I 3-dehydroquinase family. Homodimer.

It catalyses the reaction 3-dehydroquinate = 3-dehydroshikimate + H2O. It functions in the pathway metabolic intermediate biosynthesis; chorismate biosynthesis; chorismate from D-erythrose 4-phosphate and phosphoenolpyruvate: step 3/7. Functionally, involved in the third step of the chorismate pathway, which leads to the biosynthesis of aromatic amino acids. Catalyzes the cis-dehydration of 3-dehydroquinate (DHQ) and introduces the first double bond of the aromatic ring to yield 3-dehydroshikimate. In Aromatoleum aromaticum (strain DSM 19018 / LMG 30748 / EbN1) (Azoarcus sp. (strain EbN1)), this protein is 3-dehydroquinate dehydratase.